The following is a 175-amino-acid chain: ATP synthase subunit b (175 aa).

A helical transmembrane segment spans residues 20–40 (LIFWTAVTFVIVLLILKQLAW).

Belongs to the ATPase B chain family. In terms of assembly, F-type ATPases have 2 components, F(1) - the catalytic core - and F(0) - the membrane proton channel. F(1) has five subunits: alpha(3), beta(3), gamma(1), delta(1), epsilon(1). F(0) has four main subunits: a(1), b(2) and c(10-14). The alpha and beta chains form an alternating ring which encloses part of the gamma chain. F(1) is attached to F(0) by a central stalk formed by the gamma and epsilon chains, while a peripheral stalk is formed by the delta and b chains.

The protein resides in the cell inner membrane. F(1)F(0) ATP synthase produces ATP from ADP in the presence of a proton or sodium gradient. F-type ATPases consist of two structural domains, F(1) containing the extramembraneous catalytic core and F(0) containing the membrane proton channel, linked together by a central stalk and a peripheral stalk. During catalysis, ATP synthesis in the catalytic domain of F(1) is coupled via a rotary mechanism of the central stalk subunits to proton translocation. In terms of biological role, component of the F(0) channel, it forms part of the peripheral stalk, linking F(1) to F(0). The protein is ATP synthase subunit b of Chlorobium limicola (strain DSM 245 / NBRC 103803 / 6330).